A 52-amino-acid polypeptide reads, in one-letter code: Conotoxin Cal9.2b (52 aa).

A propeptide spanning residues 1 to 6 is cleaved from the precursor; sequence KKGVTL. 3 disulfides stabilise this stretch: C14–C31, C19–C41, and C21–C46.

In terms of tissue distribution, expressed by the venom duct.

The protein resides in the secreted. In terms of biological role, probable neurotoxin with unknown target. Possibly targets ion channels. The polypeptide is Conotoxin Cal9.2b (Californiconus californicus (California cone)).